The sequence spans 105 residues: MSEFKNVTAVKKANVYFDGKVSSRVIILPNGERKTLGLMLPGEYTFSTREEEIMEMLAGSMDVKLPGSNEFVTYKEGQKFNVPSDSSFDLKVNEVVDYCCSYIAD.

Belongs to the nucleoside phosphorylase PpnP family.

It catalyses the reaction a purine D-ribonucleoside + phosphate = a purine nucleobase + alpha-D-ribose 1-phosphate. The enzyme catalyses adenosine + phosphate = alpha-D-ribose 1-phosphate + adenine. It carries out the reaction cytidine + phosphate = cytosine + alpha-D-ribose 1-phosphate. The catalysed reaction is guanosine + phosphate = alpha-D-ribose 1-phosphate + guanine. It catalyses the reaction inosine + phosphate = alpha-D-ribose 1-phosphate + hypoxanthine. The enzyme catalyses thymidine + phosphate = 2-deoxy-alpha-D-ribose 1-phosphate + thymine. It carries out the reaction uridine + phosphate = alpha-D-ribose 1-phosphate + uracil. The catalysed reaction is xanthosine + phosphate = alpha-D-ribose 1-phosphate + xanthine. Functionally, catalyzes the phosphorolysis of diverse nucleosides, yielding D-ribose 1-phosphate and the respective free bases. Can use uridine, adenosine, guanosine, cytidine, thymidine, inosine and xanthosine as substrates. Also catalyzes the reverse reactions. This Clostridioides difficile (strain 630) (Peptoclostridium difficile) protein is Pyrimidine/purine nucleoside phosphorylase.